Reading from the N-terminus, the 452-residue chain is MNSGILQVFQGELICPLCMNYFIDPVTIDCGHSFCRPCFYLNWQDIPFLVQCSECTKSTEQINLKTNIHLKKMASLARKVSLWLFLSSEEQMCGTHRETKKIFCEVDRSLLCLLCSSSQEHRYHRHRPIEWAAEEHREKLLQKMQSLWEKACENHRNLNVETTRTRCWKDYVNLRLEAIRAEYQKMPAFHHEEEKHNLEMLKKKGKEIFHRLHLSKAKMAHRMEILRGMYEELNEMCHKPDVELLQAFGDILHRSESVLLHMPQPLNPELSAGPITGLRDRLNQFRVHITLHHEEANSDIFLYEILRSMCIGCDHQDVPYFTATPRSFLAWGVQTFTSGKYYWEVHVGDSWNWAFGVCNMYRKEKNQNEKIDGKEGLFLLGCIKNDIQCSLFTTSPLMLQYIPKPTSRVGLFLDCEAKTVSFVDVNQSSLIYTIPNCSFSPPLRPIFCCIHF.

The segment at 15–56 (CPLCMNYFIDPVTIDCGHSFCRPCFYLNWQDIPFLVQCSECT) adopts an RING-type zinc-finger fold. The B box-type zinc finger occupies 88–129 (SEEQMCGTHRETKKIFCEVDRSLLCLLCSSSQEHRYHRHRPI). Residues C93, H96, C115, and H121 each coordinate Zn(2+). In terms of domain architecture, B30.2/SPRY spans 269–452 (ELSAGPITGL…LRPIFCCIHF (184 aa)).

The chain is Tripartite motif-containing protein 49C (TRIM49C) from Homo sapiens (Human).